Reading from the N-terminus, the 198-residue chain is Small ribosomal subunit protein uS4 (198 aa).

In terms of domain architecture, S4 RNA-binding spans serine 91–leucine 154.

This sequence belongs to the universal ribosomal protein uS4 family. Part of the 30S ribosomal subunit. Contacts protein S5. The interaction surface between S4 and S5 is involved in control of translational fidelity.

One of the primary rRNA binding proteins, it binds directly to 16S rRNA where it nucleates assembly of the body of the 30S subunit. In terms of biological role, with S5 and S12 plays an important role in translational accuracy. In Aster yellows witches'-broom phytoplasma (strain AYWB), this protein is Small ribosomal subunit protein uS4.